The following is a 608-amino-acid chain: Tectonic-3 (608 aa).

The N-terminal stretch at 1–22 (MRTPQLALLQVFLLMFPDGVRP) is a signal peptide. The interval 23 to 58 (QPSSSPSGAVPTSLDLQPGTVGGTLQSSSEATATRP) is disordered. Over 23-586 (QPSSSPSGAV…AFSRGVSSQK (564 aa)) the chain is Extracellular. The segment covering 45 to 54 (GTLQSSSEAT) has biased composition (polar residues). N78, N179, and N347 each carry an N-linked (GlcNAc...) asparagine glycan. The helical transmembrane segment at 587–607 (CSVSPVLILCLLLLGVLNLET) threads the bilayer. Position 608 (T608) is a topological domain, cytoplasmic.

It belongs to the tectonic family. As to quaternary structure, part of the tectonic-like complex (also named B9 complex).

It localises to the membrane. In terms of biological role, part of the tectonic-like complex which is required for tissue-specific ciliogenesis and may regulate ciliary membrane composition. May be involved in apoptosis regulation. Necessary for signal transduction through the sonic hedgehog (Shh) signaling pathway. The polypeptide is Tectonic-3 (TCTN3) (Macaca fascicularis (Crab-eating macaque)).